A 392-amino-acid chain; its full sequence is Nucleolysin TIAR (392 aa).

RRM domains are found at residues 9-102 (RTLY…WATT) and 114-192 (FHVF…WATR). N6-acetyllysine is present on lysine 139. A Phosphoserine modification is found at serine 218. Positions 222–294 (CTVYCGGIAS…HVVKCYWGKE (73 aa)) constitute an RRM 3 domain. The tract at residues 363 to 392 (GAQPPQGQAPPPVIPPPNQAGYGMASFPTQ) is disordered. A compositionally biased stretch (pro residues) spans 369–380 (GQAPPPVIPPPN).

In terms of assembly, interacts with FASTK. Phosphorylated by MAPK14 following DNA damage, releasing TIAR from GADD45A mRNA. In terms of tissue distribution, expressed both in primordial germ cells (PGCs) and in neighboring somatic cells.

The protein localises to the nucleus. The protein resides in the cytoplasm. Its subcellular location is the stress granule. It localises to the cytolytic granule. RNA-binding protein involved in alternative pre-RNA splicing and in cytoplasmic stress granules formation. Shows a preference for uridine-rich RNAs. Activates splicing of alternative exons with weak 5' splice sites followed by a U-rich stretch on its own pre-mRNA and on TIA1 mRNA. Promotes the inclusion of TIA1 exon 5 to give rise to the long isoform (isoform a) of TIA1. Acts downstream of the stress-induced phosphorylation of EIF2S1/EIF2A to promote the recruitment of untranslated mRNAs to cytoplasmic stress granules (SG). Possesses nucleolytic activity against cytotoxic lymphocyte target cells. May be involved in apoptosis. This Mus musculus (Mouse) protein is Nucleolysin TIAR (Tial1).